Consider the following 117-residue polypeptide: Large ribosomal subunit protein bL20c (117 aa).

The protein belongs to the bacterial ribosomal protein bL20 family.

It localises to the plastid. The protein localises to the chloroplast. Binds directly to 23S ribosomal RNA and is necessary for the in vitro assembly process of the 50S ribosomal subunit. It is not involved in the protein synthesizing functions of that subunit. This Aethionema grandiflorum (Persian stone-cress) protein is Large ribosomal subunit protein bL20c.